The chain runs to 161 residues: Cyclic pyranopterin monophosphate synthase (161 aa).

Substrate is bound by residues 78 to 80 (MCH) and 116 to 117 (ME). Residue Asp131 is part of the active site.

This sequence belongs to the MoaC family. As to quaternary structure, homohexamer; trimer of dimers.

It carries out the reaction (8S)-3',8-cyclo-7,8-dihydroguanosine 5'-triphosphate = cyclic pyranopterin phosphate + diphosphate. It functions in the pathway cofactor biosynthesis; molybdopterin biosynthesis. Catalyzes the conversion of (8S)-3',8-cyclo-7,8-dihydroguanosine 5'-triphosphate to cyclic pyranopterin monophosphate (cPMP). This chain is Cyclic pyranopterin monophosphate synthase, found in Nitratidesulfovibrio vulgaris (strain ATCC 29579 / DSM 644 / CCUG 34227 / NCIMB 8303 / VKM B-1760 / Hildenborough) (Desulfovibrio vulgaris).